The sequence spans 988 residues: Kinesin-like protein CIN8 (988 aa).

Residues 33–470 (NILVAVRCRG…LEYASKAKNI (438 aa)) enclose the Kinesin motor domain. 125–132 (GMTSTGKT) contacts ATP. Residues 206–301 (FDSNVNGTSA…NSNNTNQQQS (96 aa)) form a disordered region. A compositionally biased stretch (low complexity) spans 208 to 237 (SNVNGTSASGSSSRSSSRNNSPRSAPDNSR). Residues 248-280 (HNTTGNSKISNNNHNKFSRFKQTSQESTRAHAS) show a composition bias toward polar residues. Low complexity predominate over residues 281–301 (NNHQNVHIPNNNSNNTNQQQS). Coiled coils occupy residues 514-619 (EHYK…ELQQ) and 707-769 (KLAE…MQNF). Residues 965–974 (ALQEKRKPED) are compositionally biased toward basic and acidic residues. Residues 965-988 (ALQEKRKPEDEVLLQAKLQRRNPD) are disordered.

Belongs to the TRAFAC class myosin-kinesin ATPase superfamily. Kinesin family. BimC subfamily.

The protein localises to the cytoplasm. The protein resides in the cytoskeleton. Its subcellular location is the spindle. Its function is as follows. Elongates the mitotic spindle by interacting with spindle microtubules to generate an outward force pushing spindle poles apart. Following spindle assembly, CIN8 and KIP1 apparently act to oppose a force, possibly generated by KAR3, that draws separated poles back together. The chain is Kinesin-like protein CIN8 (CIN8) from Candida glabrata (strain ATCC 2001 / BCRC 20586 / JCM 3761 / NBRC 0622 / NRRL Y-65 / CBS 138) (Yeast).